A 688-amino-acid polypeptide reads, in one-letter code: Glycine--tRNA ligase beta subunit (688 aa).

Belongs to the class-II aminoacyl-tRNA synthetase family. As to quaternary structure, tetramer of two alpha and two beta subunits.

The protein resides in the cytoplasm. The catalysed reaction is tRNA(Gly) + glycine + ATP = glycyl-tRNA(Gly) + AMP + diphosphate. The protein is Glycine--tRNA ligase beta subunit of Shewanella sp. (strain MR-7).